The sequence spans 258 residues: Phycoerythrobilin:ferredoxin oxidoreductase (258 aa).

It belongs to the HY2 family.

The enzyme catalyses (3Z)-phycoerythrobilin + oxidized 2[4Fe-4S]-[ferredoxin] = 15,16-dihydrobiliverdin + reduced 2[4Fe-4S]-[ferredoxin] + 2 H(+). Catalyzes the two-electron reduction of the C2 and C3(1) diene system of 15,16-dihydrobiliverdin. This is Phycoerythrobilin:ferredoxin oxidoreductase from Prochlorococcus marinus (strain NATL2A).